Consider the following 353-residue polypeptide: Photosystem II D2 protein (353 aa).

Thr-2 carries the post-translational modification N-acetylthreonine. Thr-2 carries the phosphothreonine modification. A helical membrane pass occupies residues 41-61 (CAYFALGGWFTGTTFVTSWYT). A chlorophyll a-binding site is contributed by His-118. Residues 125-141 (GFMLRQFELARSVQLRP) form a helical membrane-spanning segment. Pheophytin a contacts are provided by Gln-130 and Asn-143. A helical transmembrane segment spans residues 153-166 (VFVSVFLIYPLGQS). Position 198 (His-198) interacts with chlorophyll a. The helical transmembrane segment at 208-228 (AALLCAIHGATVENTLFEDGD) threads the bilayer. A plastoquinone contacts are provided by His-215 and Phe-262. His-215 contacts Fe cation. His-269 contributes to the Fe cation binding site. Residues 279 to 295 (GLWMSALGVVGLALNLR) traverse the membrane as a helical segment.

The protein belongs to the reaction center PufL/M/PsbA/D family. In terms of assembly, PSII is composed of 1 copy each of membrane proteins PsbA, PsbB, PsbC, PsbD, PsbE, PsbF, PsbH, PsbI, PsbJ, PsbK, PsbL, PsbM, PsbT, PsbX, PsbY, PsbZ, Psb30/Ycf12, at least 3 peripheral proteins of the oxygen-evolving complex and a large number of cofactors. It forms dimeric complexes. The cofactor is The D1/D2 heterodimer binds P680, chlorophylls that are the primary electron donor of PSII, and subsequent electron acceptors. It shares a non-heme iron and each subunit binds pheophytin, quinone, additional chlorophylls, carotenoids and lipids. There is also a Cl(-1) ion associated with D1 and D2, which is required for oxygen evolution. The PSII complex binds additional chlorophylls, carotenoids and specific lipids..

It localises to the plastid. The protein localises to the chloroplast thylakoid membrane. It carries out the reaction 2 a plastoquinone + 4 hnu + 2 H2O = 2 a plastoquinol + O2. Its function is as follows. Photosystem II (PSII) is a light-driven water:plastoquinone oxidoreductase that uses light energy to abstract electrons from H(2)O, generating O(2) and a proton gradient subsequently used for ATP formation. It consists of a core antenna complex that captures photons, and an electron transfer chain that converts photonic excitation into a charge separation. The D1/D2 (PsbA/PsbD) reaction center heterodimer binds P680, the primary electron donor of PSII as well as several subsequent electron acceptors. D2 is needed for assembly of a stable PSII complex. The sequence is that of Photosystem II D2 protein from Platanus occidentalis (Sycamore).